The primary structure comprises 257 residues: UPF0246 protein YaaA (257 aa).

Belongs to the UPF0246 family.

This is UPF0246 protein YaaA from Salmonella choleraesuis (strain SC-B67).